The sequence spans 704 residues: Elongation factor G (704 aa).

Residues 8–291 form the tr-type G domain; the sequence is DRVRNIGIMA…AVIDYLASPV (284 aa). GTP contacts are provided by residues 17-24, 90-94, and 144-147; these read AHIDAGKT, DTPGH, and NKMD.

Belongs to the TRAFAC class translation factor GTPase superfamily. Classic translation factor GTPase family. EF-G/EF-2 subfamily.

It localises to the cytoplasm. Functionally, catalyzes the GTP-dependent ribosomal translocation step during translation elongation. During this step, the ribosome changes from the pre-translocational (PRE) to the post-translocational (POST) state as the newly formed A-site-bound peptidyl-tRNA and P-site-bound deacylated tRNA move to the P and E sites, respectively. Catalyzes the coordinated movement of the two tRNA molecules, the mRNA and conformational changes in the ribosome. This Chlorobaculum tepidum (strain ATCC 49652 / DSM 12025 / NBRC 103806 / TLS) (Chlorobium tepidum) protein is Elongation factor G.